The sequence spans 156 residues: Small ribosomal subunit protein uS7 (156 aa).

Belongs to the universal ribosomal protein uS7 family. Part of the 30S ribosomal subunit. Contacts proteins S9 and S11.

One of the primary rRNA binding proteins, it binds directly to 16S rRNA where it nucleates assembly of the head domain of the 30S subunit. Is located at the subunit interface close to the decoding center, probably blocks exit of the E-site tRNA. This chain is Small ribosomal subunit protein uS7, found in Alkaliphilus metalliredigens (strain QYMF).